Reading from the N-terminus, the 161-residue chain is Peroxynitrite isomerase 1 (161 aa).

Positions 17–23 (GTWTGRG) match the GXWXGXG motif. Heme b is bound at residue His-152.

It belongs to the nitrobindin family. In terms of assembly, homodimer. The cofactor is heme b.

It carries out the reaction peroxynitrite = nitrate. It functions in the pathway nitrogen metabolism. Heme-binding protein able to scavenge peroxynitrite and to protect free L-tyrosine against peroxynitrite-mediated nitration, by acting as a peroxynitrite isomerase that converts peroxynitrite to nitrate. Therefore, this protein likely plays a role in peroxynitrite sensing and in the detoxification of reactive nitrogen and oxygen species (RNS and ROS, respectively). Is able to bind nitric oxide (NO) in vitro, but may act as a sensor of peroxynitrite levels in vivo. This is Peroxynitrite isomerase 1 from Mycolicibacterium paratuberculosis (strain ATCC BAA-968 / K-10) (Mycobacterium paratuberculosis).